We begin with the raw amino-acid sequence, 173 residues long: Cell division protein SepF (173 aa).

Positions 17–85 (SDDEYISDET…NELRTITTVH (69 aa)) are disordered. Residues 35–52 (SAGGSSAAVSESGSTSVA) are compositionally biased toward low complexity.

The protein belongs to the SepF family. In terms of assembly, homodimer. Interacts with FtsZ.

The protein localises to the cytoplasm. In terms of biological role, cell division protein that is part of the divisome complex and is recruited early to the Z-ring. Probably stimulates Z-ring formation, perhaps through the cross-linking of FtsZ protofilaments. Its function overlaps with FtsA. The sequence is that of Cell division protein SepF from Kocuria rhizophila (strain ATCC 9341 / DSM 348 / NBRC 103217 / DC2201).